Here is a 546-residue protein sequence, read N- to C-terminus: Peptidoglycan transport ATP-binding protein YejF (546 aa).

ABC transporter domains lie at 12–261 (VRDL…RHLL) and 291–530 (IKAG…KALL). ATP contacts are provided by residues 46–53 (GESGSGKS) and 323–330 (GESGSGKT).

It belongs to the ABC transporter superfamily. In terms of assembly, the complex is composed of one ATP-binding protein (YejF), two transmembrane proteins (YejB and YejE) and a solute-binding protein (YepA or YejA).

It is found in the cell inner membrane. Functionally, part of the ABC transporter complex YejBEF-YepA involved in the uptake of muropeptides, the breakdown products of cell wall peptidoglycan. The import of muropeptides into the cell enables peptidoglycan recycling, which is vital for cell wall integrity in this bacterium. Is also probably part of the ABC transporter complex YejABEF, which is likely involved in broad-spectrum peptide import. Responsible for energy coupling to the transport system. The protein is Peptidoglycan transport ATP-binding protein YejF of Agrobacterium fabrum (strain C58 / ATCC 33970) (Agrobacterium tumefaciens (strain C58)).